Here is a 273-residue protein sequence, read N- to C-terminus: Dermonecrotic toxin LapSicTox-alphaIB1bi (273 aa).

Residue H5 is part of the active site. Positions 25 and 27 each coordinate Mg(2+). The active-site Nucleophile is H41. Intrachain disulfides connect C45/C51 and C47/C190. D85 is a Mg(2+) binding site. N189 and N250 each carry an N-linked (GlcNAc...) asparagine glycan.

This sequence belongs to the arthropod phospholipase D family. Class II subfamily. Mg(2+) serves as cofactor. As to expression, expressed by the venom gland.

It localises to the secreted. The catalysed reaction is an N-(acyl)-sphingosylphosphocholine = an N-(acyl)-sphingosyl-1,3-cyclic phosphate + choline. The enzyme catalyses an N-(acyl)-sphingosylphosphoethanolamine = an N-(acyl)-sphingosyl-1,3-cyclic phosphate + ethanolamine. It catalyses the reaction a 1-acyl-sn-glycero-3-phosphocholine = a 1-acyl-sn-glycero-2,3-cyclic phosphate + choline. It carries out the reaction a 1-acyl-sn-glycero-3-phosphoethanolamine = a 1-acyl-sn-glycero-2,3-cyclic phosphate + ethanolamine. Dermonecrotic toxins cleave the phosphodiester linkage between the phosphate and headgroup of certain phospholipids (sphingolipid and lysolipid substrates), forming an alcohol (often choline) and a cyclic phosphate. This toxin acts on sphingomyelin (SM). It may also act on ceramide phosphoethanolamine (CPE), lysophosphatidylcholine (LPC) and lysophosphatidylethanolamine (LPE), but not on lysophosphatidylserine (LPS), and lysophosphatidylglycerol (LPG). It acts by transphosphatidylation, releasing exclusively cyclic phosphate products as second products. Induces dermonecrosis, hemolysis, increased vascular permeability, edema, inflammatory response, and platelet aggregation. This Loxosceles apachea (Apache recluse spider) protein is Dermonecrotic toxin LapSicTox-alphaIB1bi.